Here is a 233-residue protein sequence, read N- to C-terminus: MVGGPRVVVALDFSDRKQLDEFVAKLDPGLCRLKVGKELFTTFGPAIVEQLQARGFEVFLDLKFHDIPNTTAQAVKAAAGLGVWMVNVHASGGRRMMEACREVLEQESHAPLLIAVTMLTSLSDEEIVEIGFPCSAQEMVGRLAVLAQSSGMDGVVCSAQEAPLLRRAHGEEFCLVTPGIRPAAAAADDQTRIVTPAQAITDGSSYLVVGRPITRALNPLDALQQIVKEVESV.

Substrate is bound by residues Asp12, Lys34, Asp61–Thr70, Thr120, Arg181, Gln190, Gly210, and Arg211. The Proton donor role is filled by Lys63.

The protein belongs to the OMP decarboxylase family. Type 1 subfamily. In terms of assembly, homodimer.

The enzyme catalyses orotidine 5'-phosphate + H(+) = UMP + CO2. It participates in pyrimidine metabolism; UMP biosynthesis via de novo pathway; UMP from orotate: step 2/2. Functionally, catalyzes the decarboxylation of orotidine 5'-monophosphate (OMP) to uridine 5'-monophosphate (UMP). This is Orotidine 5'-phosphate decarboxylase from Hahella chejuensis (strain KCTC 2396).